The following is a 545-amino-acid chain: 2-succinyl-5-enolpyruvyl-6-hydroxy-3-cyclohexene-1-carboxylate synthase (545 aa).

It belongs to the TPP enzyme family. MenD subfamily. Homodimer. It depends on Mg(2+) as a cofactor. Mn(2+) is required as a cofactor. Requires thiamine diphosphate as cofactor.

It carries out the reaction isochorismate + 2-oxoglutarate + H(+) = 5-enolpyruvoyl-6-hydroxy-2-succinyl-cyclohex-3-ene-1-carboxylate + CO2. It participates in quinol/quinone metabolism; 1,4-dihydroxy-2-naphthoate biosynthesis; 1,4-dihydroxy-2-naphthoate from chorismate: step 2/7. It functions in the pathway quinol/quinone metabolism; menaquinone biosynthesis. Functionally, catalyzes the thiamine diphosphate-dependent decarboxylation of 2-oxoglutarate and the subsequent addition of the resulting succinic semialdehyde-thiamine pyrophosphate anion to isochorismate to yield 2-succinyl-5-enolpyruvyl-6-hydroxy-3-cyclohexene-1-carboxylate (SEPHCHC). The sequence is that of 2-succinyl-5-enolpyruvyl-6-hydroxy-3-cyclohexene-1-carboxylate synthase from Nocardia farcinica (strain IFM 10152).